The chain runs to 146 residues: 3-dehydroquinate dehydratase (146 aa).

Tyr23 (proton acceptor) is an active-site residue. Residues Asn74, His80, and Asp87 each coordinate substrate. The active-site Proton donor is the His100. Residues Ile101–Ser102 and Arg111 contribute to the substrate site.

It belongs to the type-II 3-dehydroquinase family. In terms of assembly, homododecamer.

The enzyme catalyses 3-dehydroquinate = 3-dehydroshikimate + H2O. It participates in metabolic intermediate biosynthesis; chorismate biosynthesis; chorismate from D-erythrose 4-phosphate and phosphoenolpyruvate: step 3/7. Catalyzes a trans-dehydration via an enolate intermediate. The protein is 3-dehydroquinate dehydratase of Bacillus cereus (strain ATCC 14579 / DSM 31 / CCUG 7414 / JCM 2152 / NBRC 15305 / NCIMB 9373 / NCTC 2599 / NRRL B-3711).